The sequence spans 192 residues: Imidazoleglycerol-phosphate dehydratase (192 aa).

It belongs to the imidazoleglycerol-phosphate dehydratase family.

It is found in the cytoplasm. It carries out the reaction D-erythro-1-(imidazol-4-yl)glycerol 3-phosphate = 3-(imidazol-4-yl)-2-oxopropyl phosphate + H2O. It participates in amino-acid biosynthesis; L-histidine biosynthesis; L-histidine from 5-phospho-alpha-D-ribose 1-diphosphate: step 6/9. This Carboxydothermus hydrogenoformans (strain ATCC BAA-161 / DSM 6008 / Z-2901) protein is Imidazoleglycerol-phosphate dehydratase.